A 628-amino-acid polypeptide reads, in one-letter code: Chaperone protein HtpG (628 aa).

Positions 1 to 337 (MSEKKYTFET…SADLPLNVSR (337 aa)) are a; substrate-binding. Residues 338-554 (EILQHNKVID…DYGMSLHMQK (217 aa)) form a b region. A c region spans residues 555 to 628 (MMEEAGQSFM…FVKLVNKYIR (74 aa)).

It belongs to the heat shock protein 90 family. Homodimer.

It is found in the cytoplasm. Its function is as follows. Molecular chaperone. Has ATPase activity. The polypeptide is Chaperone protein HtpG (Francisella tularensis subsp. tularensis (strain FSC 198)).